The following is a 439-amino-acid chain: MATRAARVWSGWWLLLLPLLGLAGASGPRTLVLLDNLNLRETHSLFFRSLKDRGFVLTFKTADDPSLSLIKYGEFLYDNLIIFSPSVEDFGGNINVETISAFIDGGGSVLVAASSDIGDPLRELGSECGIEFDEEKTAVIDHHNYDVSDLGQHTLIVADTENLLKAPTIVGKSSLNPILFRGVGMVADPDNPLVLDILTGSSTSYSFFPDKPITQYPHAVGKNTLLIAGLQARNNARVIFSGSLDFFSDAFFNSAVQKAAPGSQRYSQTGNYELAVALSRWVFKEEGVLRVGPVSHHRVGETAPPNAYTVTDLVEYSIVIEQLSDGKWVPFDGDDIQLEFVRIDPFVRTFLKRKGGKYSVQFKLPDVYGVFQFKVDYNRLGYTHLYSSTQVSVRPLQHTQYERFIPSAYPYYASAFSMMLGLFIFSVVFLHMKEKEKSD.

The signal sequence occupies residues 1-26; it reads MATRAARVWSGWWLLLLPLLGLAGAS. The Lumenal segment spans residues 27-409; the sequence is GPRTLVLLDN…QYERFIPSAY (383 aa). A helical membrane pass occupies residues 410–430; the sequence is PYYASAFSMMLGLFIFSVVFL. The Cytoplasmic portion of the chain corresponds to 431–439; that stretch reads HMKEKEKSD.

Belongs to the DDOST 48 kDa subunit family. As to quaternary structure, component of the oligosaccharyltransferase (OST) complex. OST exists in two different complex forms which contain common core subunits RPN1, RPN2, OST48, OST4, DAD1 and TMEM258, either STT3A or STT3B as catalytic subunits, and form-specific accessory subunits. STT3A complex assembly occurs through the formation of 3 subcomplexes. Subcomplex 1 contains RPN1 and TMEM258, subcomplex 2 contains the STT3A-specific subunits STT3A, DC2/OSTC, and KCP2 as well as the core subunit OST4, and subcomplex 3 contains RPN2, DAD1, and OST48. The STT3A complex can form stable complexes with the Sec61 complex or with both the Sec61 and TRAP complexes. Interacts with SMIM22.

It is found in the endoplasmic reticulum membrane. Its pathway is protein modification; protein glycosylation. Subunit of the oligosaccharyl transferase (OST) complex that catalyzes the initial transfer of a defined glycan (Glc(3)Man(9)GlcNAc(2) in eukaryotes) from the lipid carrier dolichol-pyrophosphate to an asparagine residue within an Asn-X-Ser/Thr consensus motif in nascent polypeptide chains, the first step in protein N-glycosylation. N-glycosylation occurs cotranslationally and the complex associates with the Sec61 complex at the channel-forming translocon complex that mediates protein translocation across the endoplasmic reticulum (ER). All subunits are required for a maximal enzyme activity. Required for the assembly of both SST3A- and SS3B-containing OST complexes. The chain is Dolichyl-diphosphooligosaccharide--protein glycosyltransferase 48 kDa subunit from Bos taurus (Bovine).